The chain runs to 209 residues: LexA repressor (209 aa).

Residues 32–52 (VREIGKAVDLSSTSTVHGHLA) constitute a DNA-binding region (H-T-H motif). Residues serine 131 and lysine 169 each act as for autocatalytic cleavage activity in the active site.

It belongs to the peptidase S24 family. In terms of assembly, homodimer.

It carries out the reaction Hydrolysis of Ala-|-Gly bond in repressor LexA.. Its function is as follows. Represses a number of genes involved in the response to DNA damage (SOS response), including recA and lexA. In the presence of single-stranded DNA, RecA interacts with LexA causing an autocatalytic cleavage which disrupts the DNA-binding part of LexA, leading to derepression of the SOS regulon and eventually DNA repair. The sequence is that of LexA repressor from Enterococcus faecalis (strain ATCC 700802 / V583).